The sequence spans 384 residues: Acetylgalactosaminyl-O-glycosyl-glycoprotein beta-1,3-N-acetylglucosaminyltransferase (384 aa).

Topologically, residues 1–12 (MAFPCRRSLTAK) are cytoplasmic. Residues 13–31 (TLACLLVGVSFLALQQWFL) form a helical; Signal-anchor for type II membrane protein membrane-spanning segment. The Lumenal segment spans residues 32 to 384 (QAPRSPREER…LSCDRGHRVS (353 aa)). Positions 34–68 (PRSPREERSPQEETPEGPTDAPAADEPPSELVPGP) are disordered. 3 N-linked (GlcNAc...) asparagine glycosylation sites follow: N73, N77, and N196.

It belongs to the glycosyltransferase 31 family. In terms of tissue distribution, present in stomach and colon (at protein level). Restricted in the stomach, colon and small intestine, where core 3 structure is present.

The protein resides in the golgi apparatus membrane. It catalyses the reaction a 3-O-[N-acetyl-alpha-D-galactosaminyl]-L-threonyl-[protein] + UDP-N-acetyl-alpha-D-glucosamine = a 3-O-[N-acetyl-beta-D-glucosaminyl-(1-&gt;3)-N-acetyl-alpha-D-galactosaminyl]-L-threonyl-[protein] + UDP + H(+). The enzyme catalyses a 3-O-[N-acetyl-alpha-D-galactosaminyl]-L-seryl-[protein] + UDP-N-acetyl-alpha-D-glucosamine = 3-O-[N-acetyl-beta-D-glucosaminyl-(1-&gt;3)-N-acetyl-alpha-D-galactosaminyl]-L-seryl-[protein] + UDP + H(+). It functions in the pathway protein modification; protein glycosylation. Functionally, beta-1,3-N-acetylglucosaminyltransferase that synthesizes the core 3 structure of the O-glycan, an important precursor in the biosynthesis of mucin-type glycoproteins. Plays an important role in the synthesis of mucin-type O-glycans in digestive organs. The protein is Acetylgalactosaminyl-O-glycosyl-glycoprotein beta-1,3-N-acetylglucosaminyltransferase (B3GNT6) of Homo sapiens (Human).